Here is a 502-residue protein sequence, read N- to C-terminus: Protein O-glucosyltransferase 2 (502 aa).

A signal peptide spans 1–19 (MFGTLLLYCFFLATVPALA). A Filamin repeat occupies 24–130 (ERQLSPEKSE…VAKSPYILKG (107 aa)). Residues Asn-302 and Asn-414 are each glycosylated (N-linked (GlcNAc...) asparagine). A Prevents secretion from ER motif is present at residues 499 to 502 (KDEL).

It belongs to the KDELC family. In terms of processing, N-glycosylated.

Its subcellular location is the endoplasmic reticulum lumen. It catalyses the reaction L-seryl-[EGF-like domain protein] + UDP-alpha-D-glucose = 3-O-(beta-D-glucosyl)-L-seryl-[EGF-like domain protein] + UDP + H(+). The enzyme catalyses L-seryl-[EGF-like domain protein] + UDP-alpha-D-xylose = 3-O-(beta-D-xylosyl)-L-seryl-[EGF-like domain protein] + UDP + H(+). It functions in the pathway protein modification; protein glycosylation. Functionally, protein glucosyltransferase that catalyzes the transfer of glucose from UDP-glucose to a serine residue within the consensus sequence peptide C-X-N-T-X-G-S-F-X-C. Can also catalyze the transfer of xylose from UDP-xylose but less efficiently. Specifically targets extracellular EGF repeats of proteins such as NOTCH1, NOTCH3, FBN1, FBN2 and LTBP1. May regulate the transport of NOTCH1 and NOTCH3 to the plasma membrane and thereby the Notch signaling pathway. The sequence is that of Protein O-glucosyltransferase 2 from Homo sapiens (Human).